A 574-amino-acid polypeptide reads, in one-letter code: MNQTRVFLIFAWLMVAALLWMEWGKDKAAANAPVVAATQSVPAARDLDAATPSAANVPAAQAIPQAGAPGAVPATSTTAATPAAAGAAPVVTLTSDVLRLKLDGRSVLDAELLQFPQTKDGTAPVSLLTEDPAHPYNATSGWASEHSPVPGVGGFRAEQPGTTFDMAKGQNTLVVPFVWNGPDGVSIRRTFTLERGRYAISIKDEVINKSGAPWNGYVFRKLSRVPTILSRGMTNPDSFSFNGATWYSPQEGYERRAFKDYMDDGGLNRQITGGWVALLQHHFFTAWIPQKDQASLYVLAQDGPRDVAELRGPAFTVAPGQTASTEARLWVGPKLVSLIAKEDVKGLDRVVDYSRFSIMAIIGQGLFWVLSHLHSFLHNWGWAIIGLVVLLRLALYPLSAAQYKSGAKMRRFQPRLAQLKERYGDDRVKYQQATMELFKKEKINPMGGCLPLLIQMPIFFALYWVLVESVELRQAPWLGWIQDLTARDPYFILPLLNISIMWATQKLTPTPGMDPMQAKMMQFMPLVFGVMMAFMPAGLVLYWVVNGGLGLLIQWWMIRQHGEKPSKIIQANAK.

The next 6 helical transmembrane spans lie at Val6 to Asp26, Phe356 to Phe376, Trp380 to Ala400, Gly447 to Val467, Pro489 to Pro509, and Pro525 to Val545.

The protein belongs to the OXA1/ALB3/YidC family. Type 1 subfamily. Interacts with the Sec translocase complex via SecD. Specifically interacts with transmembrane segments of nascent integral membrane proteins during membrane integration.

Its subcellular location is the cell inner membrane. Its function is as follows. Required for the insertion and/or proper folding and/or complex formation of integral membrane proteins into the membrane. Involved in integration of membrane proteins that insert both dependently and independently of the Sec translocase complex, as well as at least some lipoproteins. Aids folding of multispanning membrane proteins. This chain is Membrane protein insertase YidC, found in Xanthomonas axonopodis pv. citri (strain 306).